Reading from the N-terminus, the 281-residue chain is Ribosomal RNA small subunit methyltransferase A (281 aa).

S-adenosyl-L-methionine contacts are provided by Asn-36, Leu-38, Gly-63, Glu-84, Asp-109, and Asn-127.

It belongs to the class I-like SAM-binding methyltransferase superfamily. rRNA adenine N(6)-methyltransferase family. RsmA subfamily.

It is found in the cytoplasm. It carries out the reaction adenosine(1518)/adenosine(1519) in 16S rRNA + 4 S-adenosyl-L-methionine = N(6)-dimethyladenosine(1518)/N(6)-dimethyladenosine(1519) in 16S rRNA + 4 S-adenosyl-L-homocysteine + 4 H(+). Its function is as follows. Specifically dimethylates two adjacent adenosines (A1518 and A1519) in the loop of a conserved hairpin near the 3'-end of 16S rRNA in the 30S particle. May play a critical role in biogenesis of 30S subunits. The protein is Ribosomal RNA small subunit methyltransferase A of Borrelia garinii subsp. bavariensis (strain ATCC BAA-2496 / DSM 23469 / PBi) (Borreliella bavariensis).